Here is a 613-residue protein sequence, read N- to C-terminus: Kelch-like protein 21 (613 aa).

The BTB domain maps to 38–105; that stretch reads FDVTLCAEGK…CYTGRVTVTH (68 aa). The BACK domain maps to 140–242; that stretch reads CLEIQDFAEA…RRFYLLAHVE (103 aa). Kelch repeat units follow at residues 289-337, 338-384, 386-424, 426-472, 474-514, and 515-562; these read ILVV…ALGN, DIYV…VLKG, LYVV…ACRG, LYAI…TLNG, IYFV…ALGG, and RLYV…SIFR.

In terms of assembly, component of the BCR(KLHL21) E3 ubiquitin ligase complex, at least composed of cul3, klhl21 and rbx1.

It is found in the cytoplasm. The protein localises to the cytoskeleton. Its subcellular location is the spindle. It functions in the pathway protein modification; protein ubiquitination. Substrate-specific adapter of BCR (BTB-CUL3-RBX1) E3 ubiquitin-protein ligase complex required for efficient chromosome alignment and cytokinesis. The BCR(KLHL21) E3 ubiquitin ligase complex regulates localization of the chromosomal passenger complex (CPC) from chromosomes to the spindle midzone in anaphase and mediates the ubiquitination of AURKB. The protein is Kelch-like protein 21 (klhl21) of Danio rerio (Zebrafish).